The chain runs to 221 residues: UPF0319 protein NTHI1987 (221 aa).

A signal peptide spans 1–21 (MKLRAVVLGLATLCTSTATFA).

This sequence belongs to the UPF0319 family.

This chain is UPF0319 protein NTHI1987, found in Haemophilus influenzae (strain 86-028NP).